A 407-amino-acid polypeptide reads, in one-letter code: Wilms tumor protein homolog B (407 aa).

Residues K55 and K158 each participate in a glycyl lysine isopeptide (Lys-Gly) (interchain with G-Cter in SUMO) cross-link. Residues 213–221 (MTWNQMNLG) carry the 9aaTAD motif. 4 consecutive C2H2-type zinc fingers follow at residues 284-308 (FMCA…SRKH), 314-338 (YQCD…QRRH), 344-366 (FQCK…TRTH), and 372-396 (FSCR…HNMH). 2 important for interaction with target DNA regions span residues 328–342 (SDQL…TGVK) and 354–362 (SRSDHLKTH).

It belongs to the EGR C2H2-type zinc-finger protein family. In terms of tissue distribution, expressed in the pronephric anlage from stage 23 to 30. Also expressed in the adult kidney (mesonephros) and in testis.

It is found in the nucleus. Its subcellular location is the cytoplasm. The protein localises to the nucleus speckle. Functionally, transcription factor required for development of the vascular component of the pronephric kidney, the glomus; may repress tubule-specific gene expression in the portion of the pronephros fated to form the glomus. Recognizes and binds to the DNA sequence 5'-GCG(T/G)GGGCG-3'. Inhibits Wnt-signaling during embryonic development. The protein is Wilms tumor protein homolog B (wt1-b) of Xenopus laevis (African clawed frog).